Here is a 256-residue protein sequence, read N- to C-terminus: Ubiquinone/menaquinone biosynthesis C-methyltransferase UbiE (256 aa).

Residues threonine 79, aspartate 100, and 128-129 (DA) each bind S-adenosyl-L-methionine.

It belongs to the class I-like SAM-binding methyltransferase superfamily. MenG/UbiE family.

The catalysed reaction is a 2-demethylmenaquinol + S-adenosyl-L-methionine = a menaquinol + S-adenosyl-L-homocysteine + H(+). It catalyses the reaction a 2-methoxy-6-(all-trans-polyprenyl)benzene-1,4-diol + S-adenosyl-L-methionine = a 5-methoxy-2-methyl-3-(all-trans-polyprenyl)benzene-1,4-diol + S-adenosyl-L-homocysteine + H(+). It participates in quinol/quinone metabolism; menaquinone biosynthesis; menaquinol from 1,4-dihydroxy-2-naphthoate: step 2/2. The protein operates within cofactor biosynthesis; ubiquinone biosynthesis. Functionally, methyltransferase required for the conversion of demethylmenaquinol (DMKH2) to menaquinol (MKH2) and the conversion of 2-polyprenyl-6-methoxy-1,4-benzoquinol (DDMQH2) to 2-polyprenyl-3-methyl-6-methoxy-1,4-benzoquinol (DMQH2). This chain is Ubiquinone/menaquinone biosynthesis C-methyltransferase UbiE, found in Pseudomonas fluorescens (strain SBW25).